Consider the following 182-residue polypeptide: Putative adenylate kinase (182 aa).

ATP contacts are provided by G10, G12, K13, T14, and S15. The tract at residues 30–53 is NMP; sequence HLNEMIKEEHLYTEVDEVRDAVIA. The segment at 104–114 is LID; the sequence is ARGYSEEKIRE. 2 residues coordinate ATP: R105 and K143.

Belongs to the adenylate kinase family. AK6 subfamily. Interacts with uS11. Not a structural component of 40S pre-ribosomes, but transiently interacts with them by binding to uS11.

It carries out the reaction AMP + ATP = 2 ADP. The enzyme catalyses ATP + H2O = ADP + phosphate + H(+). Broad-specificity nucleoside monophosphate (NMP) kinase that catalyzes the reversible transfer of the terminal phosphate group between nucleoside triphosphates and monophosphates. Also has ATPase activity. Involved in the late maturation steps of the 30S ribosomal particles, specifically 16S rRNA maturation. While NMP activity is not required for ribosome maturation, ATPase activity is. Associates transiently with small ribosomal subunit protein uS11. ATP hydrolysis breaks the interaction with uS11. May temporarily remove uS11 from the ribosome to enable a conformational change of the ribosomal RNA that is needed for the final maturation step of the small ribosomal subunit. In Methanosarcina barkeri (strain Fusaro / DSM 804), this protein is Putative adenylate kinase.